The sequence spans 127 residues: Aspartate 1-decarboxylase (127 aa).

The Schiff-base intermediate with substrate; via pyruvic acid role is filled by Ser25. The residue at position 25 (Ser25) is a Pyruvic acid (Ser). Residue Thr57 coordinates substrate. Tyr58 (proton donor) is an active-site residue. Substrate is bound at residue 73-75; the sequence is GAA.

Belongs to the PanD family. As to quaternary structure, heterooctamer of four alpha and four beta subunits. The cofactor is pyruvate. Is synthesized initially as an inactive proenzyme, which is activated by self-cleavage at a specific serine bond to produce a beta-subunit with a hydroxyl group at its C-terminus and an alpha-subunit with a pyruvoyl group at its N-terminus.

The protein resides in the cytoplasm. It carries out the reaction L-aspartate + H(+) = beta-alanine + CO2. It functions in the pathway cofactor biosynthesis; (R)-pantothenate biosynthesis; beta-alanine from L-aspartate: step 1/1. Catalyzes the pyruvoyl-dependent decarboxylation of aspartate to produce beta-alanine. This is Aspartate 1-decarboxylase from Staphylococcus carnosus (strain TM300).